A 173-amino-acid polypeptide reads, in one-letter code: Peptidyl-prolyl cis-trans isomerase cyp3 (173 aa).

Residues 8-172 (FMDIAIDGRL…SNVAIVECGE (165 aa)) form the PPIase cyclophilin-type domain.

Belongs to the cyclophilin-type PPIase family. PPIase H subfamily.

The protein resides in the cytoplasm. Its subcellular location is the cytoskeleton. The protein localises to the microtubule organizing center. It is found in the spindle pole body. It carries out the reaction [protein]-peptidylproline (omega=180) = [protein]-peptidylproline (omega=0). In terms of biological role, PPIases accelerate the folding of proteins. It catalyzes the cis-trans isomerization of proline imidic peptide bonds in oligopeptides. The chain is Peptidyl-prolyl cis-trans isomerase cyp3 (cyp3) from Schizosaccharomyces pombe (strain 972 / ATCC 24843) (Fission yeast).